The sequence spans 55 residues: Large ribosomal subunit protein bL32 (55 aa).

Residues 1 to 28 form a disordered region; the sequence is MAVQQNKPTRSKRGMRRSHDALTTATLS.

It belongs to the bacterial ribosomal protein bL32 family.

This chain is Large ribosomal subunit protein bL32, found in Serratia proteamaculans (strain 568).